We begin with the raw amino-acid sequence, 227 residues long: Casparian strip membrane protein 2 (227 aa).

Residues 1–59 (MSSTSEATVIHMDGAAGKTPATAVPPPPPPAPTAPVQQQRKAGGVPFLLRSGAEGFRRC) lie on the Cytoplasmic side of the membrane. Positions 17 to 37 (GKTPATAVPPPPPPAPTAPVQ) are disordered. Residues 23–33 (AVPPPPPPAPT) are compositionally biased toward pro residues. Residues 60-80 (MALLDLLLRVAAMGPTLAAAI) traverse the membrane as a helical segment. Topologically, residues 81-107 (STGTSDETLSVFTHYFQFRARFDDFSA) are extracellular. A helical transmembrane segment spans residues 108 to 128 (FTFFMVANAVAAGYLLMSLPF). Residues 129-149 (SAFGVIRPKATSVRLLLLICD) lie on the Cytoplasmic side of the membrane. A helical membrane pass occupies residues 150-170 (TIMVVLVTAAASAAAAIVYVA). Over 171–197 (HEGNRRANWVPICMQFHGFCKRTSGAV) the chain is Extracellular. A helical membrane pass occupies residues 198–218 (VASFLAVLIFILLVFLGACAI). Residues 219 to 227 (RRRHTTTKH) are Cytoplasmic-facing.

This sequence belongs to the Casparian strip membrane proteins (CASP) family. In terms of assembly, homodimer and heterodimers.

It is found in the cell membrane. In terms of biological role, regulates membrane-cell wall junctions and localized cell wall deposition. Required for establishment of the Casparian strip membrane domain (CSD) and the subsequent formation of Casparian strips, a cell wall modification of the root endodermis that determines an apoplastic barrier between the intraorganismal apoplasm and the extraorganismal apoplasm and prevents lateral diffusion. This Brachypodium distachyon (Purple false brome) protein is Casparian strip membrane protein 2.